A 680-amino-acid polypeptide reads, in one-letter code: Penicillin-binding protein 2B (680 aa).

Topologically, residues 1 to 8 (MRKFNSHS) are cytoplasmic. The chain crosses the membrane as a helical span at residues 9–29 (IPIRLNLLFSIVILLFMTIIG). Topologically, residues 30–680 (RLLYMQVLNK…NLYQKYHPMN (651 aa)) are extracellular. The Acyl-ester intermediate role is filled by S386.

It belongs to the transpeptidase family. In terms of assembly, interacts with MreC in the elongasome.

It is found in the cell membrane. Functionally, a transpeptidase that forms peptide cross-links between adjacent glycan strands in cell wall peptidoglycan (PG). Part of the elongasome machinery that synthesizes peripheral PG. The polypeptide is Penicillin-binding protein 2B (Streptococcus pneumoniae serotype 2 (strain D39 / NCTC 7466)).